The chain runs to 173 residues: Crossover junction endodeoxyribonuclease RuvC (173 aa).

Catalysis depends on residues aspartate 8, glutamate 67, and aspartate 139. Aspartate 8, glutamate 67, and aspartate 139 together coordinate Mg(2+).

This sequence belongs to the RuvC family. As to quaternary structure, homodimer which binds Holliday junction (HJ) DNA. The HJ becomes 2-fold symmetrical on binding to RuvC with unstacked arms; it has a different conformation from HJ DNA in complex with RuvA. In the full resolvosome a probable DNA-RuvA(4)-RuvB(12)-RuvC(2) complex forms which resolves the HJ. The cofactor is Mg(2+).

Its subcellular location is the cytoplasm. The enzyme catalyses Endonucleolytic cleavage at a junction such as a reciprocal single-stranded crossover between two homologous DNA duplexes (Holliday junction).. Its function is as follows. The RuvA-RuvB-RuvC complex processes Holliday junction (HJ) DNA during genetic recombination and DNA repair. Endonuclease that resolves HJ intermediates. Cleaves cruciform DNA by making single-stranded nicks across the HJ at symmetrical positions within the homologous arms, yielding a 5'-phosphate and a 3'-hydroxyl group; requires a central core of homology in the junction. The consensus cleavage sequence is 5'-(A/T)TT(C/G)-3'. Cleavage occurs on the 3'-side of the TT dinucleotide at the point of strand exchange. HJ branch migration catalyzed by RuvA-RuvB allows RuvC to scan DNA until it finds its consensus sequence, where it cleaves and resolves the cruciform DNA. This chain is Crossover junction endodeoxyribonuclease RuvC, found in Vibrio cholerae serotype O1 (strain ATCC 39541 / Classical Ogawa 395 / O395).